Reading from the N-terminus, the 174-residue chain is MFIKVKLPWDVTIPAEDMDTGLMLQRAIVIRLLEAFSKEKATKDLGYLITPTILENIGEGKIKEQTGEIQFPVVFNGICFKMFKGEIVHGVVHKVHKTGVFLKSGPYEIIYLSHMKMPGYEFIPGENPFFMNQYMSRIQIGARVRFVVLDTEWREAEKDFMALASIDGDNLGPF.

It belongs to the eukaryotic RPB7/RPC8 RNA polymerase subunit family. As to quaternary structure, component of the RNA polymerase IV complex. Interacts with NRPD1.

It is found in the nucleus. In terms of biological role, DNA-dependent RNA polymerase catalyzes the transcription of DNA into RNA using the four ribonucleoside triphosphates as substrates. Component of RNA polymerase IV which mediates 24-nt short-interfering RNAs (siRNA) accumulation. Implicated in siRNA-directed heterochromatin formation through the action of DCL3 and AGO4, and subsequent DNA methylation-dependent silencing of targeted sequences. Essential component of a self-reinforcing loop coupling de novo DNA methylation to siRNA production. Required for intercellular but not intracellular RNA interference (RNAi) leading to systemic post-transcriptional gene silencing. Involved in the maintenance of post-transcriptional RNA silencing. In Arabidopsis thaliana (Mouse-ear cress), this protein is DNA-directed RNA polymerase IV subunit 7 (NRPD7).